The chain runs to 276 residues: Formamidopyrimidine-DNA glycosylase (276 aa).

The Schiff-base intermediate with DNA role is filled by P2. The active-site Proton donor is E3. The Proton donor; for beta-elimination activity role is filled by K60. The DNA site is built by H93 and R112. The FPG-type zinc-finger motif lies at 240 to 274 (NVYGKKGEPCVTCGTILEKTVVGGRGTHYCPICQP). R264 functions as the Proton donor; for delta-elimination activity in the catalytic mechanism.

The protein belongs to the FPG family. In terms of assembly, monomer. The cofactor is Zn(2+).

It catalyses the reaction Hydrolysis of DNA containing ring-opened 7-methylguanine residues, releasing 2,6-diamino-4-hydroxy-5-(N-methyl)formamidopyrimidine.. The catalysed reaction is 2'-deoxyribonucleotide-(2'-deoxyribose 5'-phosphate)-2'-deoxyribonucleotide-DNA = a 3'-end 2'-deoxyribonucleotide-(2,3-dehydro-2,3-deoxyribose 5'-phosphate)-DNA + a 5'-end 5'-phospho-2'-deoxyribonucleoside-DNA + H(+). Functionally, involved in base excision repair of DNA damaged by oxidation or by mutagenic agents. Acts as a DNA glycosylase that recognizes and removes damaged bases. Has a preference for oxidized purines, such as 7,8-dihydro-8-oxoguanine (8-oxoG). Has AP (apurinic/apyrimidinic) lyase activity and introduces nicks in the DNA strand. Cleaves the DNA backbone by beta-delta elimination to generate a single-strand break at the site of the removed base with both 3'- and 5'-phosphates. The polypeptide is Formamidopyrimidine-DNA glycosylase (Bacillus cereus (strain ATCC 10987 / NRS 248)).